Here is a 72-residue protein sequence, read N- to C-terminus: Large ribosomal subunit protein bL31 (72 aa).

Zn(2+) contacts are provided by Cys17, Cys19, Cys37, and Cys40.

Belongs to the bacterial ribosomal protein bL31 family. Type A subfamily. As to quaternary structure, part of the 50S ribosomal subunit. Zn(2+) is required as a cofactor.

Binds the 23S rRNA. In Clostridium botulinum (strain Loch Maree / Type A3), this protein is Large ribosomal subunit protein bL31.